We begin with the raw amino-acid sequence, 83 residues long: Exodeoxyribonuclease 7 small subunit (83 aa).

This sequence belongs to the XseB family. Heterooligomer composed of large and small subunits.

Its subcellular location is the cytoplasm. It catalyses the reaction Exonucleolytic cleavage in either 5'- to 3'- or 3'- to 5'-direction to yield nucleoside 5'-phosphates.. Bidirectionally degrades single-stranded DNA into large acid-insoluble oligonucleotides, which are then degraded further into small acid-soluble oligonucleotides. The chain is Exodeoxyribonuclease 7 small subunit from Aeromonas salmonicida (strain A449).